Reading from the N-terminus, the 231-residue chain is Probable transaldolase (231 aa).

The active-site Schiff-base intermediate with substrate is the lysine 83.

This sequence belongs to the transaldolase family. Type 3B subfamily.

Its subcellular location is the cytoplasm. It carries out the reaction D-sedoheptulose 7-phosphate + D-glyceraldehyde 3-phosphate = D-erythrose 4-phosphate + beta-D-fructose 6-phosphate. The protein operates within carbohydrate degradation; pentose phosphate pathway; D-glyceraldehyde 3-phosphate and beta-D-fructose 6-phosphate from D-ribose 5-phosphate and D-xylulose 5-phosphate (non-oxidative stage): step 2/3. Functionally, transaldolase is important for the balance of metabolites in the pentose-phosphate pathway. The polypeptide is Probable transaldolase (Rhodospirillum centenum (strain ATCC 51521 / SW)).